Here is an 840-residue protein sequence, read N- to C-terminus: Serotype-specific mannosyltransferase WbdA (840 aa).

The alpha-(1-&gt;2)-mannosyltransferase stretch occupies residues 2 to 399 (HILIDVQGYQ…WANTAHLAIE (398 aa)). Residues 456 to 829 (KLLVDISVLA…WKQSAEFLLK (374 aa)) are alpha-(1-&gt;3)-mannosyltransferase.

Belongs to the glycosyltransferase group 1 family. Glycosyltransferase 4 subfamily. As to quaternary structure, monomer. Interacts with the C-terminal region of WbdD. Interacts with WbdD via a surface-exposed alpha-helix in the C-terminal mannosyltransferase domain. However, the C-terminal domain is unable to interact with WbdD in the absence of its N-terminal partner.

It localises to the cell inner membrane. It catalyses the reaction [alpha-D-Man-(1-&gt;3)-alpha-D-Man-(1-&gt;3)-alpha-D-Man-(1-&gt;2)-alpha-D-Man-(1-&gt;2)](n)-alpha-D-Man-(1-&gt;3)-alpha-D-Man-(1-&gt;3)-alpha-D-Man-(1-&gt;3)-alpha-D-GlcNAc-di-trans,octa-cis-undecaprenyl diphosphate + 2 GDP-alpha-D-mannose = alpha-D-Man-(1-&gt;2)-alpha-D-Man-(1-&gt;2)-[alpha-D-Man-(1-&gt;3)-alpha-D-Man-(1-&gt;3)-alpha-D-Man-(1-&gt;2)-alpha-D-Man-(1-&gt;2)](n)-alpha-D-Man-(1-&gt;3)-alpha-D-Man-(1-&gt;3)-alpha-D-Man-(1-&gt;3)-alpha-D-GlcNAc-di-trans,octa-cis-undecaprenyl diphosphate + 2 GDP + 2 H(+). It carries out the reaction alpha-D-Man-(1-&gt;2)-alpha-D-Man-(1-&gt;2)-[alpha-D-Man-(1-&gt;3)-alpha-D-Man-(1-&gt;3)-alpha-D-Man-(1-&gt;2)-alpha-D-Man-(1-&gt;2)](n)-alpha-D-Man-(1-&gt;3)-alpha-D-Man-(1-&gt;3)-alpha-D-Man-(1-&gt;3)-alpha-D-GlcNAc-di-trans,octa-cis-undecaprenyl diphosphate + 2 GDP-alpha-D-mannose = [alpha-D-Man-(1-&gt;3)-alpha-D-Man-(1-&gt;3)-alpha-D-Man-(1-&gt;2)-alpha-D-Man-(1-&gt;2)](n+1)-alpha-D-Man-(1-&gt;3)-alpha-D-Man-(1-&gt;3)-alpha-D-Man-(1-&gt;3)-alpha-D-GlcNAc-di-trans,octa-cis-undecaprenyl diphosphate + 2 GDP + 2 H(+). Its pathway is bacterial outer membrane biogenesis; LPS O-antigen biosynthesis. With respect to regulation, the alpha-(1-&gt;2)-mannosyltransferase activity of the N-terminal domain is regulated by the activity of the C-terminal alpha-(1-&gt;3)-mannosyltransferase. The relative concentration of WbdA and WbdD is critical in determining the O polysaccharide (OPS) modal chain length. OPS chain length increases with increasing concentration of WbdA, but the maximum length does not increase beyond the wild-type modal length, despite substantial increases in WbdA concentration. Functionally, mannosyltransferase involved in the biosynthesis of the repeat unit of the lipopolysaccharide (LPS) O-antigen region. Catalyzes the polymerization of a tetrasaccharide repeat unit containing two alpha-(1-&gt;3)- and two alpha-(1-&gt;2)-linked mannopyranose residues. Extension is terminated by the action of the chain terminator bifunctional methyltransferase/kinase WbdD. The polypeptide is Serotype-specific mannosyltransferase WbdA (Escherichia coli).